The primary structure comprises 279 residues: tRNA pseudouridine synthase A (279 aa).

The active-site Nucleophile is the aspartate 54. Substrate is bound at residue tyrosine 112.

Belongs to the tRNA pseudouridine synthase TruA family. In terms of assembly, homodimer.

It catalyses the reaction uridine(38/39/40) in tRNA = pseudouridine(38/39/40) in tRNA. Formation of pseudouridine at positions 38, 39 and 40 in the anticodon stem and loop of transfer RNAs. This chain is tRNA pseudouridine synthase A, found in Cutibacterium acnes (strain DSM 16379 / KPA171202) (Propionibacterium acnes).